Consider the following 465-residue polypeptide: Solute carrier family 7 member 12 (465 aa).

Residues 1-6 lie on the Cytoplasmic side of the membrane; sequence MQLLRA. The helical transmembrane segment at 7 to 27 threads the bilayer; sequence LGVFHVSMILFSATLGTGIFV. The Extracellular portion of the chain corresponds to 28–39; the sequence is TPKAVLKYSSLN. The chain crosses the membrane as a helical span at residues 40–60; that stretch reads IPVSLSIWAGCGLLSIMSALC. Residues 61–81 lie on the Cytoplasmic side of the membrane; it reads NAEIATTYPLSGASYYFLKRT. A helical transmembrane segment spans residues 82 to 102; that stretch reads LGSSVAFLSLWIKLFAHFLGI. At 103–132 the chain is on the extracellular side; the sequence is GAQCLLIATSVIQCFYSGCPAPELPTKCLA. A helical membrane pass occupies residues 133–153; it reads LAILWSFGIVSARGIKTVAWF. A topological domain (cytoplasmic) is located at residue N154. Residues 155–175 traverse the membrane as a helical segment; the sequence is TVSSFIKLSVLCLISLTVLLV. At 176–202 the chain is on the extracellular side; it reads NGKKENVSRFENALDAELPNASQIADA. Residues 203 to 223 traverse the membrane as a helical segment; the sequence is ILQVSYSYLGSSVLIVIAGEI. The Cytoplasmic segment spans residues 224–234; that stretch reads KRPTETIPKTL. Residues 235–255 form a helical membrane-spanning segment; that stretch reads IYGISIVTVLYLLTNISYLAV. Residues 256–280 lie on the Extracellular side of the membrane; that stretch reads LTSQEIIFSDSVGVTWMNRVFPSIQ. The helical transmembrane segment at 281–301 threads the bilayer; that stretch reads WISSFLISAFLLGSVSCGIVS. Topologically, residues 302 to 327 are cytoplasmic; it reads ASRVFYSASQEGEFPSIYSMLNDHHS. Residues 328 to 351 traverse the membrane as a helical segment; it reads PAVADIQIVILSSVAIISSSIIYL. The Extracellular segment spans residues 352-356; the sequence is VKYVS. The helical transmembrane segment at 357–375 threads the bilayer; that stretch reads LGSFCINLLQMIGLLKIRY. At 376–386 the chain is on the cytoplasmic side; the sequence is QNPDIPRPYKV. Residues 387–407 form a helical membrane-spanning segment; that stretch reads WLPFIFGSIALSLFLIFTPVI. At 408 to 409 the chain is on the extracellular side; the sequence is QS. Residues 410–430 form a helical membrane-spanning segment; the sequence is PSIEHVYQVVFLFCGFLCYWL. Over 431–465 the chain is Cytoplasmic; it reads QANLNGHATCFDTITCYCQLLFNISPSEDPEEQKN.

It belongs to the amino acid-polyamine-organocation (APC) superfamily. In terms of assembly, probably forms multimers, perhaps with an unknown protein(s). In terms of tissue distribution, expressed in kidney and red blood cells (at protein level). Expressed in kidney along the collecting ducts in the cortex, outer and inner medulla. May be expressed in placenta, lungs, spleen and skeletal muscles.

It is found in the apical cell membrane. The protein resides in the basal cell membrane. It localises to the cytoplasm. In terms of biological role, probably mediates sodium- and chloride-independent uptake of neutral amino acids. This is Solute carrier family 7 member 12 from Mus musculus (Mouse).